A 492-amino-acid polypeptide reads, in one-letter code: Glutamyl-tRNA(Gln) amidotransferase subunit A (492 aa).

Catalysis depends on charge relay system residues K78 and S158. Catalysis depends on S182, which acts as the Acyl-ester intermediate.

It belongs to the amidase family. GatA subfamily. In terms of assembly, heterotrimer of A, B and C subunits.

It carries out the reaction L-glutamyl-tRNA(Gln) + L-glutamine + ATP + H2O = L-glutaminyl-tRNA(Gln) + L-glutamate + ADP + phosphate + H(+). In terms of biological role, allows the formation of correctly charged Gln-tRNA(Gln) through the transamidation of misacylated Glu-tRNA(Gln) in organisms which lack glutaminyl-tRNA synthetase. The reaction takes place in the presence of glutamine and ATP through an activated gamma-phospho-Glu-tRNA(Gln). This is Glutamyl-tRNA(Gln) amidotransferase subunit A from Rhodopseudomonas palustris (strain HaA2).